Consider the following 316-residue polypeptide: Acetyl-coenzyme A carboxylase carboxyl transferase subunit alpha (316 aa).

The CoA carboxyltransferase C-terminal domain occupies 35 to 292 (EIEILSQKLE…KTYVLQELKD (258 aa)).

The protein belongs to the AccA family. As to quaternary structure, acetyl-CoA carboxylase is a heterohexamer composed of biotin carboxyl carrier protein (AccB), biotin carboxylase (AccC) and two subunits each of ACCase subunit alpha (AccA) and ACCase subunit beta (AccD).

It localises to the cytoplasm. The catalysed reaction is N(6)-carboxybiotinyl-L-lysyl-[protein] + acetyl-CoA = N(6)-biotinyl-L-lysyl-[protein] + malonyl-CoA. The protein operates within lipid metabolism; malonyl-CoA biosynthesis; malonyl-CoA from acetyl-CoA: step 1/1. In terms of biological role, component of the acetyl coenzyme A carboxylase (ACC) complex. First, biotin carboxylase catalyzes the carboxylation of biotin on its carrier protein (BCCP) and then the CO(2) group is transferred by the carboxyltransferase to acetyl-CoA to form malonyl-CoA. This Alkaliphilus oremlandii (strain OhILAs) (Clostridium oremlandii (strain OhILAs)) protein is Acetyl-coenzyme A carboxylase carboxyl transferase subunit alpha.